The following is a 190-amino-acid chain: Putative transcription factor ovo-like protein 3 (190 aa).

Disordered regions lie at residues 1-21 (MPRAFLVRSRRPQPPNWGHLP) and 35-65 (SLGGPPAQQSSSVRDPWTAQPTQGNLTSAPR). Polar residues predominate over residues 41–62 (AQQSSSVRDPWTAQPTQGNLTS). 4 consecutive C2H2-type zinc fingers follow at residues 70 to 92 (LGCPLCPKAFPLQRMLTRHLKCH), 98 to 120 (HLCRCCGKGFHDAFDLKRHMRTH), 126 to 149 (FRCSACGKAFTQRCSLEAHLAKVH), and 165 to 187 (HVCEDCGFTSSRPDTYAQHRALH).

Belongs to the krueppel C2H2-type zinc-finger protein family.

The protein resides in the nucleus. Its function is as follows. May act as a transcription regulator. The protein is Putative transcription factor ovo-like protein 3 (OVOL3) of Homo sapiens (Human).